The chain runs to 264 residues: Neuferricin (264 aa).

The N-terminal stretch at 1–22 is a signal peptide; it reads MLRCGGRGLLLGLAVAAAAVMA. Positions 35–134 constitute a Cytochrome b5 heme-binding domain; the sequence is FRLFIPEELS…KNYVCVGRVT (100 aa).

The protein belongs to the cytochrome b5 family. MAPR subfamily.

The protein localises to the secreted. Functionally, heme-binding protein which promotes neuronal but not astrocyte differentiation. The polypeptide is Neuferricin (Homo sapiens (Human)).